An 84-amino-acid polypeptide reads, in one-letter code: U8-theraphotoxin-Hhn1e (84 aa).

An N-terminal signal peptide occupies residues 1–21 (MKVVLLVCLVWMMAMMELVSC). 5 disulfide bridges follow: C23–C35, C29–C44, C34–C67, C54–C75, and C69–C81.

This sequence belongs to the AVIT (prokineticin) family. Expressed by the venom gland.

Its subcellular location is the secreted. In Cyriopagopus hainanus (Chinese bird spider), this protein is U8-theraphotoxin-Hhn1e.